A 93-amino-acid chain; its full sequence is Small hydrophobic protein (93 aa).

The next 2 membrane-spanning stretches (helical) occupy residues 5-25 (LIIIGAAFLVGPRTFKFVLAY) and 32-52 (AFGPPLQIVQFMVWLIIIYFP).

It localises to the membrane. The chain is Small hydrophobic protein from Tupaia virus (isolate Tupaia/Thailand/-/1986) (TUPV).